Reading from the N-terminus, the 880-residue chain is METNEQTMPTKYDPAAVEKDRYDFWLKGKFFEAGSDQTKEPYSVVIPPPNVTGRLHLGHAWDTTLQDIVTRMKRMQGYDVLWLPGMDHAGIATQAKVEAKLREEGKSRYDLGREKFLEETWKWKEEYADFIRSQWAKLGLGLDYSRERFTLDEGLSKAVREVFVKLYEKGLIYRGEYIINWDPATKTALSDIEVIYKDVQGAFYHMSYPLADGSGSIEIATTRPETMLGDTAVAVHPEDERYKHLIGKTVILPIVNREIPIVGDDYVDMEFGSGAVKITPAHDPNDFELGNRHNLERILVMNEDGTMNENALQYQGMDRFECRKKLVKDLQEAGVLFKIEDHMHSVGHSERSGAVVEPYLSTQWFVRMQPLADAAIELQKKEEKVNFVPDRFEKTYLHWMENIRDWCISRQLWWGHRIPAWYHKETGELYVGLEAPEDSENWEQDTDVLDTWFSSALWPFSTMGWPDVTAEDFKRYYPTDVLVTGYDIIFFWVSRMIFQGIEFTGERPFKDVLIHGLIRDEQGRKMSKSLGNGVDPMDVIDKYGADSLRYFLATGSSPGQDLRFSYEKVESTWNFANKIWNASRFALMNMDGMTYDELDLSGEKSVADKWILTRLNETIEHVTQLADRYEFGEVGRHLYNFIWDDFCDWYIEMAKLPLYGEDEAAKKTTRSILAYVLDQTMRLLHPFMPFLTEEIWQHLPHQGESITVSQWPAVVPEHTDTEAAADMKLLVELIRSVRNIRSEVNTPMSKQVELYIKTSTDEIASRLEANRSYVERFTNPSVLKIGTDIEAVDKAMTAVVSGAEVILPLEGLINIDEEIARLQKEFDKLTKEVERVQKKLGNEGFMKKAPAHVIDEEREKEKDYVAKRDAVQKRMAELKG.

The 'HIGH' region signature appears at 49–59; it reads PNVTGRLHLGH. The short motif at 525 to 529 is the 'KMSKS' region element; the sequence is KMSKS. Residue Lys-528 participates in ATP binding. Residues 809–879 adopt a coiled-coil conformation; the sequence is LEGLINIDEE…AVQKRMAELK (71 aa).

It belongs to the class-I aminoacyl-tRNA synthetase family. ValS type 1 subfamily. As to quaternary structure, monomer.

It is found in the cytoplasm. It carries out the reaction tRNA(Val) + L-valine + ATP = L-valyl-tRNA(Val) + AMP + diphosphate. Its function is as follows. As ValRS can inadvertently accommodate and process structurally similar amino acids such as threonine, to avoid such errors, it has a 'posttransfer' editing activity that hydrolyzes mischarged Thr-tRNA(Val) in a tRNA-dependent manner. Catalyzes the attachment of valine to tRNA(Val). The chain is Valine--tRNA ligase from Bacillus subtilis (strain 168).